The sequence spans 375 residues: Quinolinate synthase (375 aa).

The iminosuccinate site is built by His-47 and Ser-64. Residue Cys-110 participates in [4Fe-4S] cluster binding. Iminosuccinate is bound by residues 144-146 (YVN) and Ser-165. Cys-235 provides a ligand contact to [4Fe-4S] cluster. Residues 261–263 (HPE) and Thr-278 each bind iminosuccinate. [4Fe-4S] cluster is bound at residue Cys-325.

It belongs to the quinolinate synthase family. Type 3 subfamily. [4Fe-4S] cluster is required as a cofactor.

It localises to the cytoplasm. It carries out the reaction iminosuccinate + dihydroxyacetone phosphate = quinolinate + phosphate + 2 H2O + H(+). Its pathway is cofactor biosynthesis; NAD(+) biosynthesis; quinolinate from iminoaspartate: step 1/1. Functionally, catalyzes the condensation of iminoaspartate with dihydroxyacetone phosphate to form quinolinate. The sequence is that of Quinolinate synthase from Herpetosiphon aurantiacus (strain ATCC 23779 / DSM 785 / 114-95).